The sequence spans 102 residues: uncharacterized protein (102 aa).

A helical membrane pass occupies residues 29-52 (IGSTYFCFGGAIFILVAPLTNLVY).

Its subcellular location is the membrane. This is an uncharacterized protein from Saccharomyces cerevisiae (strain ATCC 204508 / S288c) (Baker's yeast).